Here is an 88-residue protein sequence, read N- to C-terminus: Small ribosomal subunit protein uS17 (88 aa).

This sequence belongs to the universal ribosomal protein uS17 family. As to quaternary structure, part of the 30S ribosomal subunit.

In terms of biological role, one of the primary rRNA binding proteins, it binds specifically to the 5'-end of 16S ribosomal RNA. This is Small ribosomal subunit protein uS17 from Prochlorococcus marinus (strain NATL1A).